A 253-amino-acid polypeptide reads, in one-letter code: MSGHSKWATTKHKKAVIDARRAKAFAKYIKNIEVAARAGGPDVAGNPALDLAVSKAKKASVPNDNIDRAVKRGAGLTGEVIDYAEIMYEVRGPQGSALLVECLTDNKNRAAADVRAAVTRNGGTMADSGSVSFLFERKGLVRLPAEGNTEDGLLEAVLEGGADAEEVVLSGDSFEILSDPSDLQSVAKALDEAGVEYESDELEFVPTMKVDLDASGARTFLRLTDALEDLDDVQNVFSNVDIAPEVLAELDED.

It belongs to the TACO1 family.

It is found in the cytoplasm. This Micrococcus luteus (strain ATCC 4698 / DSM 20030 / JCM 1464 / CCM 169 / CCUG 5858 / IAM 1056 / NBRC 3333 / NCIMB 9278 / NCTC 2665 / VKM Ac-2230) (Micrococcus lysodeikticus) protein is Probable transcriptional regulatory protein Mlut_12910.